The following is a 189-amino-acid chain: Cancer/testis antigen family 45 member A10 (189 aa).

The protein belongs to the CT45 family.

The protein localises to the nucleus. The sequence is that of Cancer/testis antigen family 45 member A10 from Homo sapiens (Human).